Reading from the N-terminus, the 430-residue chain is 3-phosphoshikimate 1-carboxyvinyltransferase (430 aa).

Residues K23, S24, and R28 each contribute to the 3-phosphoshikimate site. K23 lines the phosphoenolpyruvate pocket. Phosphoenolpyruvate is bound by residues G95 and R123. Residues S169, Q171, D315, and K342 each coordinate 3-phosphoshikimate. Residue Q171 participates in phosphoenolpyruvate binding. D315 serves as the catalytic Proton acceptor. R346 and R388 together coordinate phosphoenolpyruvate.

The protein belongs to the EPSP synthase family. Monomer.

It is found in the cytoplasm. It catalyses the reaction 3-phosphoshikimate + phosphoenolpyruvate = 5-O-(1-carboxyvinyl)-3-phosphoshikimate + phosphate. It participates in metabolic intermediate biosynthesis; chorismate biosynthesis; chorismate from D-erythrose 4-phosphate and phosphoenolpyruvate: step 6/7. In terms of biological role, catalyzes the transfer of the enolpyruvyl moiety of phosphoenolpyruvate (PEP) to the 5-hydroxyl of shikimate-3-phosphate (S3P) to produce enolpyruvyl shikimate-3-phosphate and inorganic phosphate. The chain is 3-phosphoshikimate 1-carboxyvinyltransferase from Streptococcus pyogenes serotype M2 (strain MGAS10270).